Reading from the N-terminus, the 75-residue chain is UPF0235 protein MSMEG_3845 (75 aa).

This sequence belongs to the UPF0235 family.

The protein is UPF0235 protein MSMEG_3845 of Mycolicibacterium smegmatis (strain ATCC 700084 / mc(2)155) (Mycobacterium smegmatis).